The following is a 387-amino-acid chain: Probable tRNA sulfurtransferase (387 aa).

The THUMP domain maps to 67–167; sequence SLLKNLFTRL…KEHFLIISES (101 aa). Residues 185–186, 210–211, arginine 269, glycine 287, and glutamine 296 each bind ATP; these read LL and TF.

The protein belongs to the ThiI family.

The protein localises to the cytoplasm. It carries out the reaction [ThiI sulfur-carrier protein]-S-sulfanyl-L-cysteine + a uridine in tRNA + 2 reduced [2Fe-2S]-[ferredoxin] + ATP + H(+) = [ThiI sulfur-carrier protein]-L-cysteine + a 4-thiouridine in tRNA + 2 oxidized [2Fe-2S]-[ferredoxin] + AMP + diphosphate. The enzyme catalyses [ThiS sulfur-carrier protein]-C-terminal Gly-Gly-AMP + S-sulfanyl-L-cysteinyl-[cysteine desulfurase] + AH2 = [ThiS sulfur-carrier protein]-C-terminal-Gly-aminoethanethioate + L-cysteinyl-[cysteine desulfurase] + A + AMP + 2 H(+). It participates in cofactor biosynthesis; thiamine diphosphate biosynthesis. In terms of biological role, catalyzes the ATP-dependent transfer of a sulfur to tRNA to produce 4-thiouridine in position 8 of tRNAs, which functions as a near-UV photosensor. Also catalyzes the transfer of sulfur to the sulfur carrier protein ThiS, forming ThiS-thiocarboxylate. This is a step in the synthesis of thiazole, in the thiamine biosynthesis pathway. The sulfur is donated as persulfide by IscS. The chain is Probable tRNA sulfurtransferase from Mycoplasma pneumoniae (strain ATCC 29342 / M129 / Subtype 1) (Mycoplasmoides pneumoniae).